Reading from the N-terminus, the 597-residue chain is Aspartate--tRNA(Asp/Asn) ligase (597 aa).

Residue Glu178 participates in L-aspartate binding. The interval 202-205 is aspartate; sequence QLFK. Arg224 is an L-aspartate binding site. Residues 224 to 226 and Gln233 each bind ATP; that span reads RDE. L-aspartate is bound at residue His458. Residue Glu488 coordinates ATP. Arg495 is an L-aspartate binding site. Position 540–543 (540–543) interacts with ATP; the sequence is GLDR.

Belongs to the class-II aminoacyl-tRNA synthetase family. Type 1 subfamily. In terms of assembly, homodimer.

It is found in the cytoplasm. The enzyme catalyses tRNA(Asx) + L-aspartate + ATP = L-aspartyl-tRNA(Asx) + AMP + diphosphate. Aspartyl-tRNA synthetase with relaxed tRNA specificity since it is able to aspartylate not only its cognate tRNA(Asp) but also tRNA(Asn). Reaction proceeds in two steps: L-aspartate is first activated by ATP to form Asp-AMP and then transferred to the acceptor end of tRNA(Asp/Asn). The protein is Aspartate--tRNA(Asp/Asn) ligase of Cyanothece sp. (strain PCC 7425 / ATCC 29141).